A 428-amino-acid chain; its full sequence is D-amino acid dehydrogenase (428 aa).

Position 3 to 17 (Val-3 to Tyr-17) interacts with FAD.

Belongs to the DadA oxidoreductase family. FAD is required as a cofactor.

It carries out the reaction a D-alpha-amino acid + A + H2O = a 2-oxocarboxylate + AH2 + NH4(+). Its pathway is amino-acid degradation; D-alanine degradation; NH(3) and pyruvate from D-alanine: step 1/1. Functionally, oxidative deamination of D-amino acids. The protein is D-amino acid dehydrogenase of Burkholderia multivorans (strain ATCC 17616 / 249).